The primary structure comprises 100 residues: Small ribosomal subunit protein uS14c (100 aa).

This sequence belongs to the universal ribosomal protein uS14 family. In terms of assembly, part of the 30S ribosomal subunit.

The protein localises to the plastid. It localises to the chloroplast. Binds 16S rRNA, required for the assembly of 30S particles. This is Small ribosomal subunit protein uS14c from Barbarea verna (Land cress).